The sequence spans 581 residues: Leucine-rich repeat-containing protein 47 (581 aa).

7 LRR repeats span residues 78-97 (QLHS…SPEL), 102-123 (ALRV…EGLG), 132-154 (QLQS…ARCA), 156-177 (RLQS…LFRP), 182-204 (LLSE…AHLA), 205-227 (SLKT…ADCP), and 228-248 (KLKE…EKMV). The disordered stretch occupies residues 262–301 (AGGRGGRSKGRQEASEKEDRKKRRERKQHRESGEGEEEVA). Residues 271-280 (GRQEASEKED) are compositionally biased toward basic and acidic residues. A phosphoserine mark is found at Ser-314, Ser-430, and Ser-519. Residues 401–436 (LGRKEAKAKELVRQLQLEAEEQRKQKKRQSVSGLHR) adopt a coiled-coil conformation.

The sequence is that of Leucine-rich repeat-containing protein 47 (Lrrc47) from Mus musculus (Mouse).